Reading from the N-terminus, the 193-residue chain is Ion-translocating oxidoreductase complex subunit A (193 aa).

A run of 6 helical transmembrane segments spans residues 5–25, 39–59, 62–82, 102–122, 134–154, and 171–191; these read ALLF…FLGL, IGMG…SWLI, FILV…LVLA, LLGI…VVLL, TIYG…FAAI, and SIAL…TGLV.

This sequence belongs to the NqrDE/RnfAE family. In terms of assembly, the complex is composed of six subunits: RnfA, RnfB, RnfC, RnfD, RnfE and RnfG.

Its subcellular location is the cell inner membrane. Functionally, part of a membrane-bound complex that couples electron transfer with translocation of ions across the membrane. In Pectobacterium atrosepticum (strain SCRI 1043 / ATCC BAA-672) (Erwinia carotovora subsp. atroseptica), this protein is Ion-translocating oxidoreductase complex subunit A.